Here is a 466-residue protein sequence, read N- to C-terminus: Phosphomethylpyrimidine synthase (466 aa).

Substrate is bound by residues Asn80, Met109, Tyr139, His175, 195-197, 236-239, and Glu275; these read SRG and DSLR. His279 contacts Zn(2+). Tyr302 contributes to the substrate binding site. His343 contacts Zn(2+). Residues Cys423, Cys426, and Cys431 each coordinate [4Fe-4S] cluster.

The protein belongs to the ThiC family. Requires [4Fe-4S] cluster as cofactor.

The catalysed reaction is 5-amino-1-(5-phospho-beta-D-ribosyl)imidazole + S-adenosyl-L-methionine = 4-amino-2-methyl-5-(phosphooxymethyl)pyrimidine + CO + 5'-deoxyadenosine + formate + L-methionine + 3 H(+). It functions in the pathway cofactor biosynthesis; thiamine diphosphate biosynthesis. Its function is as follows. Catalyzes the synthesis of the hydroxymethylpyrimidine phosphate (HMP-P) moiety of thiamine from aminoimidazole ribotide (AIR) in a radical S-adenosyl-L-methionine (SAM)-dependent reaction. The polypeptide is Phosphomethylpyrimidine synthase (Synechococcus sp. (strain RCC307)).